The sequence spans 937 residues: Molybdenum cofactor sulfurase (937 aa).

The residue at position 237 (Lys-237) is an N6-(pyridoxal phosphate)lysine. Cys-397 is an active-site residue. Disordered stretches follow at residues 633 to 710 (GQGK…RRIL), 756 to 795 (PSPS…KLNP), and 897 to 921 (KEGT…GGNG). Basic residues predominate over residues 638-652 (MTRHAKAHLQRHQHQ). The 254-residue stretch at 682 to 935 (TPPSPPDSDT…VRVGDVVRPS (254 aa)) folds into the MOSC domain. The segment covering 756 to 767 (PSPSTPSASPSN) has biased composition (low complexity). The segment covering 900–921 (TGMGMGTGTGTGTGTRSMGGNG) has biased composition (gly residues).

This sequence belongs to the class-V pyridoxal-phosphate-dependent aminotransferase family. MOCOS subfamily. Requires pyridoxal 5'-phosphate as cofactor.

The enzyme catalyses Mo-molybdopterin + L-cysteine + AH2 = thio-Mo-molybdopterin + L-alanine + A + H2O. The protein operates within cofactor biosynthesis; molybdopterin biosynthesis. Its function is as follows. Sulfurates the molybdenum cofactor. Sulfation of molybdenum is essential for xanthine dehydrogenase (XDH) and aldehyde oxidase (ADO) enzymes in which molybdenum cofactor is liganded by 1 oxygen and 1 sulfur atom in active form. The sequence is that of Molybdenum cofactor sulfurase (nit-13) from Neurospora crassa (strain ATCC 24698 / 74-OR23-1A / CBS 708.71 / DSM 1257 / FGSC 987).